A 1002-amino-acid polypeptide reads, in one-letter code: Hypoxia up-regulated protein 1 (1002 aa).

The N-terminal stretch at 1 to 23 (MARAPRWMLGWLLLACCVPHTEP) is a signal peptide. 2 disordered regions span residues 576–698 (LFGG…PKKQ) and 918–1002 (KPKP…NDEL). The segment covering 643-675 (PPKEESQKNEEGEKSEARDPKEDKETVNEEELS) has biased composition (basic and acidic residues). The span at 933-947 (GKNATGTSESENTIP) shows a compositional bias: polar residues. 2 stretches are compositionally biased toward basic and acidic residues: residues 951-962 (GKQEEKPEDISP) and 983-1002 (SSKK…NDEL). The Prevents secretion from ER motif lies at 999 to 1002 (NDEL).

Belongs to the heat shock protein 70 family.

It localises to the endoplasmic reticulum lumen. Its function is as follows. Has a pivotal role in cytoprotective cellular mechanisms triggered by oxygen deprivation. Promotes HSPA5/BiP-mediated ATP nucleotide exchange and thereby activates the unfolded protein response (UPR) pathway in the presence of endoplasmic reticulum stress. May play a role as a molecular chaperone and participate in protein folding. In Gallus gallus (Chicken), this protein is Hypoxia up-regulated protein 1 (HYOU1).